We begin with the raw amino-acid sequence, 282 residues long: Bifunctional protein FolD (282 aa).

NADP(+) is bound by residues 164–166 (GAS), Ile-189, and Ile-230.

The protein belongs to the tetrahydrofolate dehydrogenase/cyclohydrolase family. As to quaternary structure, homodimer.

It carries out the reaction (6R)-5,10-methylene-5,6,7,8-tetrahydrofolate + NADP(+) = (6R)-5,10-methenyltetrahydrofolate + NADPH. The catalysed reaction is (6R)-5,10-methenyltetrahydrofolate + H2O = (6R)-10-formyltetrahydrofolate + H(+). The protein operates within one-carbon metabolism; tetrahydrofolate interconversion. Its function is as follows. Catalyzes the oxidation of 5,10-methylenetetrahydrofolate to 5,10-methenyltetrahydrofolate and then the hydrolysis of 5,10-methenyltetrahydrofolate to 10-formyltetrahydrofolate. This chain is Bifunctional protein FolD, found in Nitratiruptor sp. (strain SB155-2).